The following is a 287-amino-acid chain: NAD kinase (287 aa).

Asp56 (proton acceptor) is an active-site residue. NAD(+)-binding positions include 56–57 (DG), Arg61, 128–129 (ND), and Asp156.

It belongs to the NAD kinase family. The cofactor is a divalent metal cation.

It is found in the cytoplasm. The enzyme catalyses NAD(+) + ATP = ADP + NADP(+) + H(+). Functionally, involved in the regulation of the intracellular balance of NAD and NADP, and is a key enzyme in the biosynthesis of NADP. Catalyzes specifically the phosphorylation on 2'-hydroxyl of the adenosine moiety of NAD to yield NADP. This chain is NAD kinase, found in Thermomicrobium roseum (strain ATCC 27502 / DSM 5159 / P-2).